A 202-amino-acid polypeptide reads, in one-letter code: MINLLFAVIAYLIGSVSFAVVVSKVMGLPDPHSYGSGNPGATNVLRTGNKKAAIFTLIGDALKGLAAVLLAKHFGPAYGVDETGIALVALAVFLGHLFPLYHRFAGGKGVATAAGILFAIDPILGAGTLATWLIIAFFFRYSSLAALISAIFAPFFYVLMNGVDIMAGAILVISVLLIARHRANIAKLLAGKESRIGEKKKV.

6 helical membrane-spanning segments follow: residues 2 to 22 (INLLFAVIAYLIGSVSFAVVV), 51 to 71 (KAAIFTLIGDALKGLAAVLLA), 80 to 100 (VDETGIALVALAVFLGHLFPL), 116 to 136 (ILFAIDPILGAGTLATWLIIA), 137 to 157 (FFFRYSSLAALISAIFAPFFY), and 158 to 178 (VLMNGVDIMAGAILVISVLLI).

Belongs to the PlsY family. Probably interacts with PlsX.

It is found in the cell inner membrane. It catalyses the reaction an acyl phosphate + sn-glycerol 3-phosphate = a 1-acyl-sn-glycero-3-phosphate + phosphate. It functions in the pathway lipid metabolism; phospholipid metabolism. In terms of biological role, catalyzes the transfer of an acyl group from acyl-phosphate (acyl-PO(4)) to glycerol-3-phosphate (G3P) to form lysophosphatidic acid (LPA). This enzyme utilizes acyl-phosphate as fatty acyl donor, but not acyl-CoA or acyl-ACP. The chain is Glycerol-3-phosphate acyltransferase from Cupriavidus metallidurans (strain ATCC 43123 / DSM 2839 / NBRC 102507 / CH34) (Ralstonia metallidurans).